A 269-amino-acid chain; its full sequence is 5'-nucleotidase SurE (269 aa).

A divalent metal cation is bound by residues aspartate 11, aspartate 12, serine 43, and asparagine 101.

The protein belongs to the SurE nucleotidase family. Requires a divalent metal cation as cofactor.

The protein localises to the cytoplasm. The enzyme catalyses a ribonucleoside 5'-phosphate + H2O = a ribonucleoside + phosphate. Nucleotidase that shows phosphatase activity on nucleoside 5'-monophosphates. This is 5'-nucleotidase SurE from Prochlorococcus marinus (strain MIT 9301).